The primary structure comprises 300 residues: GTPase Era (300 aa).

The Era-type G domain maps to 4 to 172 (KSGFVALIGR…LEKIKKLLPE (169 aa)). The G1 stretch occupies residues 12–19 (GRPNVGKS). Position 12 to 19 (12 to 19 (GRPNVGKS)) interacts with GTP. A G2 region spans residues 38 to 42 (QTTRN). The tract at residues 59–62 (DTPG) is G3. GTP is bound by residues 59–63 (DTPGV) and 122–125 (NKAD). Residues 122–125 (NKAD) form a G4 region. The tract at residues 151–153 (IAA) is G5. The KH type-2 domain occupies 195–281 (IREKILLNLS…NLQLWVKVKK (87 aa)).

Belongs to the TRAFAC class TrmE-Era-EngA-EngB-Septin-like GTPase superfamily. Era GTPase family. Monomer.

It is found in the cytoplasm. The protein resides in the cell membrane. Its function is as follows. An essential GTPase that binds both GDP and GTP, with rapid nucleotide exchange. Plays a role in 16S rRNA processing and 30S ribosomal subunit biogenesis and possibly also in cell cycle regulation and energy metabolism. The protein is GTPase Era of Caldicellulosiruptor saccharolyticus (strain ATCC 43494 / DSM 8903 / Tp8T 6331).